The chain runs to 115 residues: Synaptobrevin homolog 2 (115 aa).

Low complexity predominate over residues 1 to 16 (MSSSVPYDPYVPPEES). Residues 1–28 (MSSSVPYDPYVPPEESNSGANPNSQNKT) form a disordered region. At 1 to 93 (MSSSVPYDPY…MWWKDLKMRM (93 aa)) the chain is on the cytoplasmic side. A compositionally biased stretch (polar residues) spans 17–28 (NSGANPNSQNKT). Residues 27-87 (KTAALRQEID…NRVRKQMWWK (61 aa)) form the v-SNARE coiled-coil homology domain. Ser58 bears the Phosphoserine mark. A Glycyl lysine isopeptide (Lys-Gly) (interchain with G-Cter in ubiquitin) cross-link involves residue Lys62. Cys94 is lipidated: S-palmitoyl cysteine. The helical; Anchor for type IV membrane protein transmembrane segment at 94 to 112 (CLFLVVIILLVVIIVPIVV) threads the bilayer. Topologically, residues 113–115 (HFS) are vesicular.

This sequence belongs to the synaptobrevin family. In terms of processing, palmitoylated by SWF1.

Its subcellular location is the endomembrane system. Functionally, SNC1 and SNC2 are vesicle-targeting proteins essential for normal secretory traffic between the Golgi and the plasma membrane. They may also be involved in vesicle fusion. The chain is Synaptobrevin homolog 2 (SNC2) from Saccharomyces cerevisiae (strain ATCC 204508 / S288c) (Baker's yeast).